A 119-amino-acid polypeptide reads, in one-letter code: Ribonuclease P protein component (119 aa).

Belongs to the RnpA family. Consists of a catalytic RNA component (M1 or rnpB) and a protein subunit.

It catalyses the reaction Endonucleolytic cleavage of RNA, removing 5'-extranucleotides from tRNA precursor.. Functionally, RNaseP catalyzes the removal of the 5'-leader sequence from pre-tRNA to produce the mature 5'-terminus. It can also cleave other RNA substrates such as 4.5S RNA. The protein component plays an auxiliary but essential role in vivo by binding to the 5'-leader sequence and broadening the substrate specificity of the ribozyme. The sequence is that of Ribonuclease P protein component from Shewanella woodyi (strain ATCC 51908 / MS32).